A 266-amino-acid polypeptide reads, in one-letter code: Luciferase (266 aa).

A helical transmembrane segment spans residues 22–41 (GLAAACCALAVASTIAFPYI).

It belongs to the fungal luciferase family.

The protein localises to the membrane. The enzyme catalyses 3-hydroxyhispidin + O2 = (E)-caffeoylpyruvate + hnu + CO2. It carries out the reaction 3-hydroxyhispidin + O2 = 4-[(E)-2-(3,4-dihydroxyphenyl)ethenyl]-1,7-dihydroxy-2,3,5-trioxabicyclo[2.2.2]oct-7-en-6-one. In terms of biological role, luciferase; part of the gene cluster that mediates the fungal bioluminescence cycle. Uses the fungal luciferin 3-hydroxyhispidin as a substrate to produce an endoperoxide as a high-energy intermediate with decomposition that yields oxyluciferin (also known as caffeoylpyruvate) and light emission. The fungal bioluminescence cycle begins with the hispidin synthetase that catalyzes the formation of hispidin which is further hydroxylated by the hispidin-3-hydroxylase, yielding the fungal luciferin 3-hydroxyhispidin. The luciferase then produces an endoperoxide as a high-energy intermediate with decomposition that yields oxyluciferin and light emission. Oxyluciferin can be recycled to caffeic acid by caffeoylpyruvate hydrolase. In Armillaria gallica (Bulbous honey fungus), this protein is Luciferase.